A 192-amino-acid chain; its full sequence is Adenylate kinase (192 aa).

Residue 10-15 coordinates ATP; sequence GAGKGT. An NMP region spans residues 30–59; it reads STGDMLREAIEKETEIGKQAKIFIESGALV. AMP contacts are provided by residues T31, R36, 57–59, 85–88, and Q92; these read ALV and GYPR. An LID region spans residues 126-142; the sequence is KRVEEVVAVGGKIRSDD. ATP is bound at residue R127. AMP is bound by residues R139 and R150. A178 is a binding site for ATP.

This sequence belongs to the adenylate kinase family. As to quaternary structure, monomer.

It is found in the cytoplasm. It catalyses the reaction AMP + ATP = 2 ADP. Its pathway is purine metabolism; AMP biosynthesis via salvage pathway; AMP from ADP: step 1/1. Its function is as follows. Catalyzes the reversible transfer of the terminal phosphate group between ATP and AMP. Plays an important role in cellular energy homeostasis and in adenine nucleotide metabolism. The sequence is that of Adenylate kinase from Bartonella bacilliformis (strain ATCC 35685 / KC583 / Herrer 020/F12,63).